Consider the following 214-residue polypeptide: Sugar fermentation stimulation protein homolog (214 aa).

This sequence belongs to the SfsA family.

In Aquifex aeolicus (strain VF5), this protein is Sugar fermentation stimulation protein homolog.